The sequence spans 239 residues: Ribose-5-phosphate isomerase A (239 aa).

Residues 40-43 (SGST), 96-99 (DGAD), and 110-113 (KGGG) each bind substrate. Glu-119 (proton acceptor) is an active-site residue. A substrate-binding site is contributed by Lys-137.

This sequence belongs to the ribose 5-phosphate isomerase family. Homodimer.

The catalysed reaction is aldehydo-D-ribose 5-phosphate = D-ribulose 5-phosphate. It participates in carbohydrate degradation; pentose phosphate pathway; D-ribose 5-phosphate from D-ribulose 5-phosphate (non-oxidative stage): step 1/1. Catalyzes the reversible conversion of ribose-5-phosphate to ribulose 5-phosphate. The polypeptide is Ribose-5-phosphate isomerase A (Methanococcus maripaludis (strain C7 / ATCC BAA-1331)).